Consider the following 203-residue polypeptide: Urease accessory protein UreE (203 aa).

Residues 170 to 190 (EHHGHSHSRSHDHDHDHDHQH) are compositionally biased toward basic and acidic residues. Residues 170-203 (EHHGHSHSRSHDHDHDHDHQHGPSCSHGHHHGHR) form a disordered region.

This sequence belongs to the UreE family.

The protein localises to the cytoplasm. Involved in urease metallocenter assembly. Binds nickel. Probably functions as a nickel donor during metallocenter assembly. The sequence is that of Urease accessory protein UreE from Burkholderia pseudomallei (strain 1710b).